We begin with the raw amino-acid sequence, 98 residues long: NADH-ubiquinone oxidoreductase chain 4L (98 aa).

A run of 3 helical transmembrane segments spans residues 1–21 (MTPT…GLAF), 26–46 (LLSA…ALSL), and 59–79 (APML…ALLV).

Belongs to the complex I subunit 4L family.

Its subcellular location is the mitochondrion membrane. The catalysed reaction is a ubiquinone + NADH + 5 H(+)(in) = a ubiquinol + NAD(+) + 4 H(+)(out). Its function is as follows. Core subunit of the mitochondrial membrane respiratory chain NADH dehydrogenase (Complex I) which catalyzes electron transfer from NADH through the respiratory chain, using ubiquinone as an electron acceptor. Part of the enzyme membrane arm which is embedded in the lipid bilayer and involved in proton translocation. The polypeptide is NADH-ubiquinone oxidoreductase chain 4L (MT-ND4L) (Gadus morhua (Atlantic cod)).